The chain runs to 514 residues: Acetylcholine receptor subunit gamma (514 aa).

The N-terminal stretch at 1–22 (MRCSDLLLLFLLALCVLPGISC) is a signal peptide. Topologically, residues 23 to 241 (RNQEEKLLQD…VIFYLIIQRK (219 aa)) are extracellular. Cys-150 and Cys-164 are disulfide-bonded. The N-linked (GlcNAc...) asparagine glycan is linked to Asn-163. Transmembrane regions (helical) follow at residues 242–266 (PLFY…VYFL), 275–293 (CTVS…FLIA), and 309–330 (YLTF…VLNV). Topologically, residues 331 to 473 (SLRTPNTHSM…WILVGRVIDR (143 aa)) are cytoplasmic. A Phosphotyrosine; by Tyr-kinases modification is found at Tyr-386. Residues 474-494 (VCFFIMASLFVCGTIGIFLMA) form a helical membrane-spanning segment.

It belongs to the ligand-gated ion channel (TC 1.A.9) family. Acetylcholine receptor (TC 1.A.9.1) subfamily. Gamma/CHRNG sub-subfamily. In terms of assembly, pentamer of two alpha chains, and one each of the beta, delta, and gamma chains.

The protein localises to the postsynaptic cell membrane. It localises to the cell membrane. It catalyses the reaction K(+)(in) = K(+)(out). The enzyme catalyses Na(+)(in) = Na(+)(out). Functionally, after binding acetylcholine, the AChR responds by an extensive change in conformation that affects all subunits and leads to opening of an ion-conducting channel across the plasma membrane. This chain is Acetylcholine receptor subunit gamma (CHRNG), found in Gallus gallus (Chicken).